The sequence spans 144 residues: Transcription antitermination protein NusB (144 aa).

This sequence belongs to the NusB family.

In terms of biological role, involved in transcription antitermination. Required for transcription of ribosomal RNA (rRNA) genes. Binds specifically to the boxA antiterminator sequence of the ribosomal RNA (rrn) operons. This is Transcription antitermination protein NusB from Histophilus somni (strain 129Pt) (Haemophilus somnus).